The sequence spans 308 residues: tRNA dimethylallyltransferase (308 aa).

An ATP-binding site is contributed by 10–17 (GPTASGKT). Residue 12–17 (TASGKT) coordinates substrate. Interaction with substrate tRNA regions lie at residues 35–38 (DSSL) and 159–163 (QRIFR).

It belongs to the IPP transferase family. As to quaternary structure, monomer. Requires Mg(2+) as cofactor.

It catalyses the reaction adenosine(37) in tRNA + dimethylallyl diphosphate = N(6)-dimethylallyladenosine(37) in tRNA + diphosphate. Its function is as follows. Catalyzes the transfer of a dimethylallyl group onto the adenine at position 37 in tRNAs that read codons beginning with uridine, leading to the formation of N6-(dimethylallyl)adenosine (i(6)A). The protein is tRNA dimethylallyltransferase of Francisella philomiragia subsp. philomiragia (strain ATCC 25017 / CCUG 19701 / FSC 153 / O#319-036).